Here is a 475-residue protein sequence, read N- to C-terminus: Polyphosphate:AMP phosphotransferase (475 aa).

PPK2 stretches follow at residues 18 to 222 (LDLI…LTAL) and 256 to 472 (ANYK…KADR).

This sequence belongs to the polyphosphate kinase 2 (PPK2) family. Class II subfamily. In terms of assembly, homodimer and homotetramer. The cofactor is Mg(2+).

It carries out the reaction [phosphate](n) + ADP = [phosphate](n+1) + AMP. Functionally, uses inorganic polyphosphate (polyP) as a donor to convert AMP to ADP. Can also use GMP, UMP, CMP, TMP or deoxyribonucleoside monophosphates, with lower efficiency. Cannot use low-molecular weight polyP as donors. Can also catalyze the synthesis of polyP from ADP or GDP, with lower efficiency. This chain is Polyphosphate:AMP phosphotransferase, found in Acinetobacter johnsonii.